We begin with the raw amino-acid sequence, 1292 residues long: Putative late blight resistance protein homolog R1C-3 (1292 aa).

Coiled coils occupy residues 394–414 and 505–526; these read DSLA…ESMQ and RMNE…KLLN. An NB-ARC domain is found at 505–792; sequence RMNEEIVGFE…SESFVKSCEG (288 aa). 538–545 serves as a coordination point for ATP; that stretch reads GMPGLGKT. LRR repeat units lie at residues 842–865, 920–944, 963–991, 1066–1089, 1094–1113, 1114–1142, and 1163–1187; these read AEEN…VYSH, FKFL…LFYL, LWNL…VWDM, PIRL…CISA, YLEL…TADH, LKHL…MFPQ, and FPNL…FMDI. One can recognise an HMA domain in the interval 1211–1278; the sequence is ETQVEDNQNT…KLRNVAYADE (68 aa).

Belongs to the disease resistance NB-LRR family.

The protein resides in the cytoplasm. Its subcellular location is the membrane. Its function is as follows. Confers resistance to late blight (Phytophthora infestans) races carrying the avirulence gene Avr1. Resistance proteins guard the plant against pathogens that contain an appropriate avirulence protein via an indirect interaction with this avirulence protein. That triggers a defense system including the hypersensitive response, which restricts the pathogen growth. In Solanum demissum (Wild potato), this protein is Putative late blight resistance protein homolog R1C-3 (R1C-3).